Reading from the N-terminus, the 865-residue chain is Xylosyltransferase 2 (865 aa).

The Cytoplasmic portion of the chain corresponds to 1–15 (MVASARVQKLVRRYK). Residues 16–36 (LAIATALAILLLQGLVVWSFS) form a helical; Signal-anchor for type II membrane protein membrane-spanning segment. Over 37 to 865 (GLEEDEPGEK…GPVKADGRLR (829 aa)) the chain is Lumenal. Residues 39–157 (EEDEPGEKGR…EGAPQPTDNG (119 aa)) form a disordered region. A compositionally biased stretch (basic and acidic residues) spans 53-65 (RPLDPGEGSKDTD). Residues 73–82 (SAGRRHGRWR) show a composition bias toward basic residues. A glycan (N-linked (GlcNAc...) asparagine) is linked at Asn-122. Residues 125–137 (GAAAGEALVGAAG) are compositionally biased toward low complexity. Cystine bridges form between Cys-162/Cys-190, Cys-206/Cys-448, Cys-467/Cys-480, and Cys-469/Cys-478. UDP-alpha-D-xylose-binding positions include Val-239, Asp-267, and 296–298 (TIW). Asn-327 carries N-linked (GlcNAc...) asparagine glycosylation. Position 400–401 (400–401 (DW)) interacts with UDP-alpha-D-xylose. UDP-alpha-D-xylose is bound by residues Ser-481 and 504 to 505 (RK). 2 disulfides stabilise this stretch: Cys-581-Cys-833 and Cys-826-Cys-839. A glycan (N-linked (GlcNAc...) asparagine) is linked at Asn-683.

It belongs to the glycosyltransferase 14 family. XylT subfamily. In terms of assembly, monomer. Requires Mg(2+) as cofactor. The cofactor is Mn(2+). Post-translationally, contains disulfide bonds.

It localises to the golgi apparatus membrane. Its subcellular location is the secreted. It catalyses the reaction UDP-alpha-D-xylose + L-seryl-[protein] = 3-O-(beta-D-xylosyl)-L-seryl-[protein] + UDP + H(+). The protein operates within glycan metabolism; chondroitin sulfate biosynthesis. Its pathway is glycan metabolism; heparan sulfate biosynthesis. In terms of biological role, catalyzes the first step in the biosynthesis of chondroitin sulfate, heparan sulfate and dermatan sulfate proteoglycans, such as DCN. Transfers D-xylose from UDP-D-xylose to specific serine residues of the core protein. The polypeptide is Xylosyltransferase 2 (XYLT2) (Canis lupus familiaris (Dog)).